The sequence spans 179 residues: Translation initiation factor IF-3 (179 aa).

The protein belongs to the IF-3 family. In terms of assembly, monomer.

Its subcellular location is the cytoplasm. In terms of biological role, IF-3 binds to the 30S ribosomal subunit and shifts the equilibrium between 70S ribosomes and their 50S and 30S subunits in favor of the free subunits, thus enhancing the availability of 30S subunits on which protein synthesis initiation begins. This is Translation initiation factor IF-3 from Leptospira borgpetersenii serovar Hardjo-bovis (strain L550).